The sequence spans 128 residues: Crossover junction endodeoxyribonuclease Hjc (128 aa).

Glu-10 is a Mg(2+) binding site. Ser-30 is an active-site residue. The Mg(2+) site is built by Asp-34 and Glu-47.

This sequence belongs to the Holliday junction resolvase Hjc family. In terms of assembly, homodimer. It depends on Mg(2+) as a cofactor.

The enzyme catalyses Endonucleolytic cleavage at a junction such as a reciprocal single-stranded crossover between two homologous DNA duplexes (Holliday junction).. Its function is as follows. A structure-specific endonuclease that resolves Holliday junction (HJ) intermediates during genetic recombination. Cleaves 4-way DNA junctions introducing paired nicks in opposing strands, leaving a 5'-terminal phosphate and a 3'-terminal hydroxyl group that are subsequently ligated to produce recombinant products. The polypeptide is Crossover junction endodeoxyribonuclease Hjc (Thermococcus kodakarensis (strain ATCC BAA-918 / JCM 12380 / KOD1) (Pyrococcus kodakaraensis (strain KOD1))).